The sequence spans 323 residues: Alpha-tubulin N-acetyltransferase 1 (323 aa).

In terms of domain architecture, N-acetyltransferase spans 1-190 (MEFPFDVDAL…NNFVIFEGFF (190 aa)). An N6-acetyllysine; by autocatalysis modification is found at lysine 56. Position 124 to 137 (124 to 137 (FYIHESVQRHGHGR)) interacts with acetyl-CoA. Lysine 146 is subject to N6-acetyllysine; by autocatalysis. Position 160–169 (160–169 (SQKLLKFLNK)) interacts with acetyl-CoA. The interval 196–239 (PPAPSLRATRHSRAAAVDPTPTAPARKLPPKRAEGDIKPYSSSD) is disordered. The segment covering 209-220 (AAAVDPTPTAPA) has biased composition (low complexity). A compositionally biased stretch (basic and acidic residues) spans 226 to 239 (KRAEGDIKPYSSSD). An N6-acetyllysine; by autocatalysis mark is found at lysine 233 and lysine 244. Positions 252 to 287 (PLNRAPRRATPPAHPPPRSSSLGNSPERGPLRPFVP) are disordered. Phosphoserine occurs at positions 272 and 276. Residue arginine 305 is modified to Asymmetric dimethylarginine. Position 315 is a phosphoserine (serine 315). Arginine 323 bears the Omega-N-methylarginine mark.

This sequence belongs to the acetyltransferase ATAT1 family. In terms of assembly, component of the BBSome complex. Interacts with AP2 alpha-adaptins, including AP2A2, but not with AP1 gamma-adaptin (AP1G1/AP1G2); this interaction is required for efficient alpha-tubulin acetylation, hence clathrin-coated pits are sites of microtubule acetylation. In terms of processing, autoacetylation strongly increases tubulin acetylation.

It localises to the cytoplasm. Its subcellular location is the membrane. The protein localises to the clathrin-coated pit. It is found in the cell junction. The protein resides in the focal adhesion. It localises to the cell projection. Its subcellular location is the axon. The protein localises to the cytoskeleton. It is found in the spindle. The catalysed reaction is L-lysyl-[alpha-tubulin] + acetyl-CoA = N(6)-acetyl-L-lysyl-[alpha-tubulin] + CoA + H(+). Its function is as follows. Specifically acetylates 'Lys-40' in alpha-tubulin on the lumenal side of microtubules. Promotes microtubule destabilization and accelerates microtubule dynamics; this activity may be independent of acetylation activity. Acetylates alpha-tubulin with a slow enzymatic rate, due to a catalytic site that is not optimized for acetyl transfer. Enters the microtubule through each end and diffuses quickly throughout the lumen of microtubules. Acetylates only long/old microtubules because of its slow acetylation rate since it does not have time to act on dynamically unstable microtubules before the enzyme is released. Required for normal sperm flagellar function. Promotes directional cell locomotion and chemotaxis, through AP2A2-dependent acetylation of alpha-tubulin at clathrin-coated pits that are concentrated at the leading edge of migrating cells. May facilitate primary cilium assembly. The protein is Alpha-tubulin N-acetyltransferase 1 of Macaca mulatta (Rhesus macaque).